The chain runs to 24 residues: Brevinin-1E (24 aa).

The cysteines at positions 18 and 24 are disulfide-linked.

Expressed by the skin glands.

The protein localises to the secreted. Its function is as follows. Antimicrobial peptide. Stimulates insulin release by BRIN-BD11 cells in vitro. This chain is Brevinin-1E, found in Pelophylax saharicus (Sahara frog).